The primary structure comprises 135 residues: Transcription antitermination protein NusB (135 aa).

It belongs to the NusB family.

Involved in transcription antitermination. Required for transcription of ribosomal RNA (rRNA) genes. Binds specifically to the boxA antiterminator sequence of the ribosomal RNA (rrn) operons. This is Transcription antitermination protein NusB from Shewanella pealeana (strain ATCC 700345 / ANG-SQ1).